We begin with the raw amino-acid sequence, 138 residues long: Gas vesicle protein A (138 aa).

A disordered region spans residues Glu74–Glu138. A compositionally biased stretch (low complexity) spans Gly116–Ser129.

The protein belongs to the gas vesicle GvpA family. As to quaternary structure, the gas vesicle shell is 2 nm thick and consists of a single layer of this protein. It forms helical ribs nearly perpendicular to the long axis of the vesicle.

Its subcellular location is the gas vesicle shell. Gas vesicles are hollow, gas filled proteinaceous nanostructures found in some microorganisms. During planktonic growth they allow positioning of the organism at a favorable depth for light or nutrient acquisition. GvpA forms the protein shell. It is not clear what function gas vesicles perform in soil bacteria. In Streptomyces sp. (strain CB03234), this protein is Gas vesicle protein A.